Here is a 298-residue protein sequence, read N- to C-terminus: Pyridoxal kinase PdxY (298 aa).

S17 lines the substrate pocket. Positions 119 and 156 each coordinate ATP. D234 serves as a coordination point for substrate.

It belongs to the pyridoxine kinase family. PdxY subfamily. Homodimer. Mg(2+) is required as a cofactor.

The enzyme catalyses pyridoxal + ATP = pyridoxal 5'-phosphate + ADP + H(+). It participates in cofactor metabolism; pyridoxal 5'-phosphate salvage; pyridoxal 5'-phosphate from pyridoxal: step 1/1. Functionally, pyridoxal kinase involved in the salvage pathway of pyridoxal 5'-phosphate (PLP). Catalyzes the phosphorylation of pyridoxal to PLP. The chain is Pyridoxal kinase PdxY from Deinococcus radiodurans (strain ATCC 13939 / DSM 20539 / JCM 16871 / CCUG 27074 / LMG 4051 / NBRC 15346 / NCIMB 9279 / VKM B-1422 / R1).